The chain runs to 216 residues: MARLNVNPTRMELTRLKKRLTTATRGHKLLKDKQDELMRRFIDLVKYNNELRKDVEEMIKNSLKDFVMARALMSSEILEEAIMYPKEKISLDVNIKNIMSVNVPEMKFKRLLEDDNGSIYPYGYSNTSAELDDAIEKLYSILPKLLELAEVEKSTQLMADEIEKTRRRVNALEYMTIPQLEETIKYIQMKLEENERGALTRLMKVKTMLEKEQESV.

It belongs to the V-ATPase D subunit family.

Functionally, produces ATP from ADP in the presence of a proton gradient across the membrane. This Clostridium novyi (strain NT) protein is V-type ATP synthase subunit D.